A 432-amino-acid chain; its full sequence is Probable protein phosphatase 2C 75 (432 aa).

Residues valine 44–leucine 356 enclose the PPM-type phosphatase domain. Positions 80, 81, 301, and 347 each coordinate Mn(2+). The tract at residues serine 372–serine 408 is disordered.

It belongs to the PP2C family. Requires Mg(2+) as cofactor. It depends on Mn(2+) as a cofactor.

The enzyme catalyses O-phospho-L-seryl-[protein] + H2O = L-seryl-[protein] + phosphate. It catalyses the reaction O-phospho-L-threonyl-[protein] + H2O = L-threonyl-[protein] + phosphate. The sequence is that of Probable protein phosphatase 2C 75 from Oryza sativa subsp. japonica (Rice).